A 161-amino-acid polypeptide reads, in one-letter code: 2-C-methyl-D-erythritol 2,4-cyclodiphosphate synthase (161 aa).

A divalent metal cation contacts are provided by Asp-10 and His-12. Residues 10–12 and 36–37 contribute to the 4-CDP-2-C-methyl-D-erythritol 2-phosphate site; these read DVH and HS. His-44 serves as a coordination point for a divalent metal cation. 4-CDP-2-C-methyl-D-erythritol 2-phosphate is bound by residues 58–60, 63–67, 102–108, 134–137, Phe-141, and Arg-144; these read DIG, FPDTD, AQAPKMA, and TTTE.

It belongs to the IspF family. In terms of assembly, homotrimer. A divalent metal cation is required as a cofactor.

It catalyses the reaction 4-CDP-2-C-methyl-D-erythritol 2-phosphate = 2-C-methyl-D-erythritol 2,4-cyclic diphosphate + CMP. Its pathway is isoprenoid biosynthesis; isopentenyl diphosphate biosynthesis via DXP pathway; isopentenyl diphosphate from 1-deoxy-D-xylulose 5-phosphate: step 4/6. Functionally, involved in the biosynthesis of isopentenyl diphosphate (IPP) and dimethylallyl diphosphate (DMAPP), two major building blocks of isoprenoid compounds. Catalyzes the conversion of 4-diphosphocytidyl-2-C-methyl-D-erythritol 2-phosphate (CDP-ME2P) to 2-C-methyl-D-erythritol 2,4-cyclodiphosphate (ME-CPP) with a corresponding release of cytidine 5-monophosphate (CMP). This chain is 2-C-methyl-D-erythritol 2,4-cyclodiphosphate synthase, found in Shewanella sediminis (strain HAW-EB3).